The following is a 641-amino-acid chain: Sodium-dependent nutrient amino acid transporter 1 (641 aa).

The segment at 1 to 38 (MELKGVQPSNGSSNGSGNGATNAASTEKTDAEKPTAER) is disordered. The Cytoplasmic portion of the chain corresponds to 1-40 (MELKGVQPSNGSSNGSGNGATNAASTEKTDAEKPTAERTN). Positions 9 to 26 (SNGSSNGSGNGATNAAST) are enriched in low complexity. The span at 27-36 (EKTDAEKPTA) shows a compositional bias: basic and acidic residues. The next 3 membrane-spanning stretches (helical) occupy residues 41-61 (WGNG…LGNV), 74-94 (GAFL…MYYL), and 111-131 (SVVP…ICII). Asn185 and Asn190 each carry an N-linked (GlcNAc...) asparagine glycan. Helical transmembrane passes span 229–249 (PDWK…LVIM), 258–278 (AAYF…IRAV), 307–327 (AVVQ…MFAS), 341–361 (IVTT…FAIL), 401–421 (LFSV…IVAL), 447–467 (VCGF…ILTL), 474–494 (TYVV…VYGL), 516–536 (CWSF…MVTI), and 552–572 (IAGW…GLWY).

The protein belongs to the sodium:neurotransmitter symporter (SNF) (TC 2.A.22) family. In terms of tissue distribution, in larvae, weak specific expression in the anterior midgut just proximal to the gastric caeca reproductive rudiments, common ureters of the Malpighian tubules, and distal swollen portion of the anterior pair of Malpighian tubules. Expression is also seen in the imaginal disks of the head; brain hemispheres and the ventral ganglion. Stronger expression in the posterior midgut.

The protein localises to the membrane. In terms of biological role, unusual broad substrate spectrum amino acid:sodium cotransporter that promotes absorption of the D isomers of essential amino acids. Neutral amino acids are the preferred substrates, especially methionine and phenylalanine. The protein is Sodium-dependent nutrient amino acid transporter 1 (NAAT1) of Drosophila melanogaster (Fruit fly).